Here is a 167-residue protein sequence, read N- to C-terminus: MPLLDSFKVDHTKMNAPAVRIAKTMCTPKGDNITVFDLRFCIPNKEILSPKGIHTLEHLFAGFMRDHLNGDSIEIIDISPMGCRTGFYMSLIGTPNEQEVSEAWLASMQDVLGVQDQASIPELNIYQCGSYTEHSLEDAHEIAKNVIARGIGVNKNEDLSLDNSLLK.

Fe cation contacts are provided by histidine 54, histidine 58, and cysteine 128.

This sequence belongs to the LuxS family. In terms of assembly, homodimer. Requires Fe cation as cofactor.

It catalyses the reaction S-(5-deoxy-D-ribos-5-yl)-L-homocysteine = (S)-4,5-dihydroxypentane-2,3-dione + L-homocysteine. Involved in the synthesis of autoinducer 2 (AI-2) which is secreted by bacteria and is used to communicate both the cell density and the metabolic potential of the environment. The regulation of gene expression in response to changes in cell density is called quorum sensing. Catalyzes the transformation of S-ribosylhomocysteine (RHC) to homocysteine (HC) and 4,5-dihydroxy-2,3-pentadione (DPD). The sequence is that of S-ribosylhomocysteine lyase from Haemophilus influenzae (strain 86-028NP).